The sequence spans 155 residues: uncharacterized protein (155 aa).

Residues 4-65 (IDEIDEIIVR…VVDTSFFGEF (62 aa)) form the HTH asnC-type domain. Residues 23–42 (LTELGKKVGLTASAVKNRIE) constitute a DNA-binding region (H-T-H motif).

This is an uncharacterized protein from Pyrococcus abyssi (strain GE5 / Orsay).